Reading from the N-terminus, the 236-residue chain is (5-formylfuran-3-yl)methyl phosphate synthase (236 aa).

Residue Lys-27 is the Schiff-base intermediate with substrate of the active site. The Proton acceptor role is filled by Lys-85.

Belongs to the MfnB family.

It carries out the reaction 2 D-glyceraldehyde 3-phosphate = 4-(hydroxymethyl)-2-furancarboxaldehyde phosphate + phosphate + 2 H2O. It participates in cofactor biosynthesis; methanofuran biosynthesis. Catalyzes the formation of 4-(hydroxymethyl)-2-furancarboxaldehyde phosphate (4-HFC-P) from two molecules of glyceraldehyde-3-P (GA-3-P). The protein is (5-formylfuran-3-yl)methyl phosphate synthase of Methanococcus maripaludis (strain C6 / ATCC BAA-1332).